The chain runs to 354 residues: UDP-3-O-acylglucosamine N-acyltransferase (354 aa).

Residue H245 is the Proton acceptor of the active site.

Belongs to the transferase hexapeptide repeat family. LpxD subfamily. In terms of assembly, homotrimer.

It carries out the reaction a UDP-3-O-[(3R)-3-hydroxyacyl]-alpha-D-glucosamine + a (3R)-hydroxyacyl-[ACP] = a UDP-2-N,3-O-bis[(3R)-3-hydroxyacyl]-alpha-D-glucosamine + holo-[ACP] + H(+). It participates in bacterial outer membrane biogenesis; LPS lipid A biosynthesis. In terms of biological role, catalyzes the N-acylation of UDP-3-O-acylglucosamine using 3-hydroxyacyl-ACP as the acyl donor. Is involved in the biosynthesis of lipid A, a phosphorylated glycolipid that anchors the lipopolysaccharide to the outer membrane of the cell. This Anaeromyxobacter dehalogenans (strain 2CP-C) protein is UDP-3-O-acylglucosamine N-acyltransferase.